Reading from the N-terminus, the 342-residue chain is Oxygen-dependent coproporphyrinogen-III oxidase (342 aa).

Position 98 (Ser-98) interacts with substrate. Residues His-102 and His-112 each contribute to the a divalent metal cation site. His-112 (proton donor) is an active-site residue. 114-116 (NYR) provides a ligand contact to substrate. 2 residues coordinate a divalent metal cation: His-146 and His-176. Residues 266-301 (YVEFNLVWDRGTIFGLQTNGRTESILMSLPPLARWE) are important for dimerization.

It belongs to the aerobic coproporphyrinogen-III oxidase family. As to quaternary structure, homodimer. It depends on a divalent metal cation as a cofactor.

The protein localises to the cytoplasm. It carries out the reaction coproporphyrinogen III + O2 + 2 H(+) = protoporphyrinogen IX + 2 CO2 + 2 H2O. The protein operates within porphyrin-containing compound metabolism; protoporphyrin-IX biosynthesis; protoporphyrinogen-IX from coproporphyrinogen-III (O2 route): step 1/1. Involved in the heme and chlorophyll biosynthesis. Catalyzes the aerobic oxidative decarboxylation of propionate groups of rings A and B of coproporphyrinogen-III to yield the vinyl groups in protoporphyrinogen-IX. In Prochlorococcus marinus (strain MIT 9301), this protein is Oxygen-dependent coproporphyrinogen-III oxidase.